The chain runs to 466 residues: MEPELLVRKVSALQACVRGFLVRRQFQSLRAEYEAIVREVEGDLGTLQWTEGRIPRPRFLPEKAKSHQTWKAGDRVANPEQGLWNHFPCEESEGEATWEEMVLKKSGESSANQGSLCRDHSSWLQMKQNRKPSQEKTRDTTRMENPEATDQRLPHSQPQLQELQYHRSHLAMELLWLQQAINSRKEYLLLKQTLRSPEAGPIREEPRVFLEHGEQACERDQSQPSAPLEDQSYRDRTTGELEQEDDSCHRVKSPHRSPGSLATTQKNIAGAKCREPCYSKSGPPSSIPSNSQALGDRLTKGPDDGRQTFGGTCLLQMKILEDQTPRGLKPRNHCPRKSRTQLSALYEDSNIKEMSPRKLDHKEPDCRTVRTQELGLSEDHIIWDGTLGGPEHSVLDLWRTKPPKGQAPTDRSSRDGTSNEPSHEGQKKQRTIPWRSKSPEILSSTKAGCTGEEQWRGRPWKTEPPG.

The region spanning 6–35 (LVRKVSALQACVRGFLVRRQFQSLRAEYEA) is the IQ domain. 4 disordered regions span residues 105-157 (KSGE…PHSQ), 214-233 (EQAC…DQSY), 238-310 (TGEL…QTFG), and 394-466 (VLDL…EPPG). A compositionally biased stretch (basic and acidic residues) spans 132–153 (PSQEKTRDTTRMENPEATDQRL). The span at 282–293 (GPPSSIPSNSQA) shows a compositional bias: polar residues. A compositionally biased stretch (basic and acidic residues) spans 297-306 (RLTKGPDDGR). S438 carries the post-translational modification Phosphoserine.

This Homo sapiens (Human) protein is IQ domain-containing protein C (IQCC).